A 42-amino-acid polypeptide reads, in one-letter code: Large ribosomal subunit protein eL32 (42 aa).

The protein belongs to the eukaryotic ribosomal protein eL32 family.

The polypeptide is Large ribosomal subunit protein eL32 (RPL32) (Zea mays (Maize)).